We begin with the raw amino-acid sequence, 435 residues long: Protein phosphatase 2C homolog 2 (435 aa).

Positions 23 to 298 (IYGVSAMQGW…DNMTMIIIGL (276 aa)) constitute a PPM-type phosphatase domain. Residues Asp-71, Gly-72, Asp-240, and Asp-289 each contribute to the Mn(2+) site. Positions 366–435 (DQTEEDRDLP…TSGAPEKSTS (70 aa)) are disordered. Basic and acidic residues predominate over residues 381-392 (ELPDSARNEREG). The span at 409–418 (GSSASTSEST) shows a compositional bias: low complexity. Polar residues predominate over residues 419-435 (VTPAGSSTSGAPEKSTS).

It belongs to the PP2C family. It depends on Mg(2+) as a cofactor. The cofactor is Mn(2+).

The protein resides in the cytoplasm. The protein localises to the nucleus. The enzyme catalyses O-phospho-L-seryl-[protein] + H2O = L-seryl-[protein] + phosphate. The catalysed reaction is O-phospho-L-threonyl-[protein] + H2O = L-threonyl-[protein] + phosphate. Its function is as follows. Dephosphorylating regulator for many key proteins. Dephosphorylates phosphoglycerate kinase pgk1 at least on 'Ser-203' to negatively regulate targeting of pgk1 to the mitochondrion, thereby negatively regulating production of acetyl-CoA and consequently aflatoxin biosynthesis. The polypeptide is Protein phosphatase 2C homolog 2 (Aspergillus flavus (strain ATCC 200026 / FGSC A1120 / IAM 13836 / NRRL 3357 / JCM 12722 / SRRC 167)).